The sequence spans 60 residues: Small integral membrane protein 3 (60 aa).

The chain crosses the membrane as a helical span at residues 20–40 (IWVIVLIILATIVIMTSLLLC).

Its subcellular location is the membrane. This Homo sapiens (Human) protein is Small integral membrane protein 3 (SMIM3).